A 486-amino-acid polypeptide reads, in one-letter code: N-succinylglutamate 5-semialdehyde dehydrogenase (486 aa).

Glycine 220–glycine 225 is a binding site for NAD(+). Catalysis depends on residues glutamate 243 and cysteine 277.

It belongs to the aldehyde dehydrogenase family. AstD subfamily.

It catalyses the reaction N-succinyl-L-glutamate 5-semialdehyde + NAD(+) + H2O = N-succinyl-L-glutamate + NADH + 2 H(+). It participates in amino-acid degradation; L-arginine degradation via AST pathway; L-glutamate and succinate from L-arginine: step 4/5. Its function is as follows. Catalyzes the NAD-dependent reduction of succinylglutamate semialdehyde into succinylglutamate. The polypeptide is N-succinylglutamate 5-semialdehyde dehydrogenase (Shewanella piezotolerans (strain WP3 / JCM 13877)).